The primary structure comprises 89 residues: Large ribosomal subunit protein bL27 (89 aa).

The interval 1 to 24 (MAHKKGTGSTRNGRDSRSQRLGVK) is disordered.

This sequence belongs to the bacterial ribosomal protein bL27 family.

The chain is Large ribosomal subunit protein bL27 from Microcystis aeruginosa (strain NIES-843 / IAM M-2473).